Consider the following 246-residue polypeptide: 1-(5-phosphoribosyl)-5-[(5-phosphoribosylamino)methylideneamino] imidazole-4-carboxamide isomerase (246 aa).

Asp-8 acts as the Proton acceptor in catalysis. Asp-131 (proton donor) is an active-site residue.

The protein belongs to the HisA/HisF family.

It localises to the cytoplasm. The enzyme catalyses 1-(5-phospho-beta-D-ribosyl)-5-[(5-phospho-beta-D-ribosylamino)methylideneamino]imidazole-4-carboxamide = 5-[(5-phospho-1-deoxy-D-ribulos-1-ylimino)methylamino]-1-(5-phospho-beta-D-ribosyl)imidazole-4-carboxamide. It functions in the pathway amino-acid biosynthesis; L-histidine biosynthesis; L-histidine from 5-phospho-alpha-D-ribose 1-diphosphate: step 4/9. This is 1-(5-phosphoribosyl)-5-[(5-phosphoribosylamino)methylideneamino] imidazole-4-carboxamide isomerase from Bordetella avium (strain 197N).